The sequence spans 373 residues: Lipoyl amidotransferase LIPT1, mitochondrial (373 aa).

The transit peptide at 1–25 (MLIPFSMKNCFQLLCNCQVPAAGFK) directs the protein to the mitochondrion. The BPL/LPL catalytic domain maps to 57 to 243 (LEGKPILFFW…EYAAYHQIDN (187 aa)). (R)-lipoyl-5'-AMP-binding residues include Tyr-107, Arg-151, Lys-161, and Thr-179.

This sequence belongs to the LplA family. As to expression, highly expressed in skeletal muscle and heart, moderately in kidney and pancreas, and detected at lower levels in liver, brain, placenta and lung.

Its subcellular location is the mitochondrion. It catalyses the reaction N(6)-[(R)-lipoyl]-L-lysyl-[glycine-cleavage complex H protein] + L-lysyl-[lipoyl-carrier protein] = L-lysyl-[glycine-cleavage complex H protein] + N(6)-[(R)-lipoyl]-L-lysyl-[lipoyl-carrier protein]. It carries out the reaction (R)-lipoyl-5'-AMP + L-lysyl-[lipoyl-carrier protein] = N(6)-[(R)-lipoyl]-L-lysyl-[lipoyl-carrier protein] + AMP + 2 H(+). It functions in the pathway protein modification; protein lipoylation via exogenous pathway; protein N(6)-(lipoyl)lysine from lipoate: step 2/2. Lipoyl amidotransferase that catalyzes the transfer of lipoyl moieties from lipoyl-protein H of the glycine cleavage system (lipoyl-GCSH) to E2 subunits of the pyruvate dehydrogenase complex (PDCE2). Unable to catalyze the transfer of octanoyl from octanoyl-GCSH to PDCE2. In vitro, it is also able to catalyze the transfer of the lipoyl group from lipoyl-AMP to the specific lysine residue of lipoyl domains of lipoate-dependent enzymes but this reaction may not be physiologically relevant. The chain is Lipoyl amidotransferase LIPT1, mitochondrial from Homo sapiens (Human).